Here is a 100-residue protein sequence, read N- to C-terminus: Large ribosomal subunit protein uL23 (100 aa).

Belongs to the universal ribosomal protein uL23 family. As to quaternary structure, part of the 50S ribosomal subunit. Contacts protein L29, and trigger factor when it is bound to the ribosome.

Functionally, one of the early assembly proteins it binds 23S rRNA. One of the proteins that surrounds the polypeptide exit tunnel on the outside of the ribosome. Forms the main docking site for trigger factor binding to the ribosome. The polypeptide is Large ribosomal subunit protein uL23 (Vibrio vulnificus (strain CMCP6)).